The chain runs to 494 residues: Glycerol kinase (494 aa).

Thr-13 contacts ADP. ATP contacts are provided by Thr-13, Thr-14, and Ser-15. Thr-13 is a binding site for sn-glycerol 3-phosphate. ADP is bound at residue Arg-17. Sn-glycerol 3-phosphate is bound by residues Arg-83, Glu-84, Tyr-135, and Asp-244. The glycerol site is built by Arg-83, Glu-84, Tyr-135, Asp-244, and Gln-245. The ADP site is built by Thr-266 and Gly-309. The ATP site is built by Thr-266, Gly-309, Gln-313, and Gly-410. The ADP site is built by Gly-410 and Asn-414.

It belongs to the FGGY kinase family.

The catalysed reaction is glycerol + ATP = sn-glycerol 3-phosphate + ADP + H(+). It functions in the pathway polyol metabolism; glycerol degradation via glycerol kinase pathway; sn-glycerol 3-phosphate from glycerol: step 1/1. With respect to regulation, inhibited by fructose 1,6-bisphosphate (FBP). Key enzyme in the regulation of glycerol uptake and metabolism. Catalyzes the phosphorylation of glycerol to yield sn-glycerol 3-phosphate. The sequence is that of Glycerol kinase from Shewanella baltica (strain OS223).